The following is a 217-amino-acid chain: NAD(P)H-quinone oxidoreductase subunit M, chloroplastic (217 aa).

Residues 1–21 (MVAAFSYTACTKLSLLHPSMV) constitute a chloroplast transit peptide. A disordered region spans residues 48-67 (ETETLKEEQSTEKMKKQPTP). Basic and acidic residues predominate over residues 50–62 (ETLKEEQSTEKMK).

This sequence belongs to the NDH complex subunit M family. In terms of assembly, part of the chloroplast NDH complex, composed of a mixture of chloroplast and nucleus encoded subunits. Component of the NDH subcomplex A, at least composed of ndhH, ndhI, ndhJ, ndhK, ndhL, ndhM, ndhN and ndhO.

The protein localises to the plastid. It localises to the chloroplast thylakoid membrane. The catalysed reaction is a plastoquinone + NADH + (n+1) H(+)(in) = a plastoquinol + NAD(+) + n H(+)(out). It catalyses the reaction a plastoquinone + NADPH + (n+1) H(+)(in) = a plastoquinol + NADP(+) + n H(+)(out). Its function is as follows. NDH shuttles electrons from NAD(P)H:plastoquinone, via FMN and iron-sulfur (Fe-S) centers, to quinones in the photosynthetic chain and possibly in a chloroplast respiratory chain. The immediate electron acceptor for the enzyme in this species is believed to be plastoquinone. Couples the redox reaction to proton translocation, and thus conserves the redox energy in a proton gradient. The polypeptide is NAD(P)H-quinone oxidoreductase subunit M, chloroplastic (Arabidopsis thaliana (Mouse-ear cress)).